Here is a 385-residue protein sequence, read N- to C-terminus: Probable caffeine synthase MTL2 (385 aa).

Tyr18, Cys62, Asn67, Asp101, Leu102, Ser140, Phe141, and Cys157 together coordinate S-adenosyl-L-homocysteine. Positions 158, 161, and 162 each coordinate caffeine. Asn179 serves as a coordination point for Mg(2+). Thr238 provides a ligand contact to caffeine. The Mg(2+) site is built by Asp261, Phe263, and Asn264. Position 369 (Tyr369) interacts with caffeine.

This sequence belongs to the methyltransferase superfamily. Type-7 methyltransferase family. Mg(2+) is required as a cofactor.

It participates in alkaloid biosynthesis. In terms of biological role, may be involved in the biosynthesis of caffeine. The protein is Probable caffeine synthase MTL2 of Coffea canephora (Robusta coffee).